The sequence spans 1676 residues: Anucleate primary sterigmata protein A (1676 aa).

Residues 1–11 (MEDSQRGNASM) are compositionally biased toward polar residues. Positions 1-35 (MEDSQRGNASMMSMMDDPFVVSPEGARDPPSTNQY) are disordered. Positions 51–127 (AQAKRALEAH…EIGQETARAF (77 aa)) form a coiled coil. Disordered stretches follow at residues 160-180 (QATN…NQSN), 353-394 (RLRQ…TPRH), 439-712 (DEVE…SRRP), 1027-1050 (GTST…PVEP), 1176-1201 (PLGA…DQGA), 1220-1270 (VRPL…QASS), and 1297-1354 (PASA…RRSS). A compositionally biased stretch (low complexity) spans 163–172 (NSPSKVSVPS). Coiled-coil stretches lie at residues 193 to 359 (TSLL…QQEA) and 408 to 453 (HAHR…AANG). Basic and acidic residues-rich tracts occupy residues 355 to 370 (RQQE…RPHD), 439 to 448 (DEVEQRRRDS), 461 to 470 (TKAETRKPAR), 479 to 489 (KKAEVEIHDSD), and 503 to 522 (ASND…RSDA). Positions 593–602 (SYYSTASTSA) are enriched in low complexity. A compositionally biased stretch (polar residues) spans 609 to 620 (DPGTPSISQFST). The span at 623 to 636 (YRLRKKRSVLRKIR) shows a compositional bias: basic residues. The span at 647 to 664 (SRPSSARESPSTSFTRDT) shows a compositional bias: polar residues. Acidic residues predominate over residues 678–687 (AEVDGDEDDF). The span at 1032 to 1042 (TVEFSVSSISS) shows a compositional bias: low complexity. Over residues 1191–1201 (SGSSNQADQGA) the composition is skewed to polar residues. Residues 1314–1341 (RASSQQRPRTPNESALQVGSAKTTTSRA) show a composition bias toward polar residues. Residues 1393 to 1504 (QTMIGEFLWK…WFNALSYLLV (112 aa)) form the PH domain. The segment covering 1511–1524 (EEAENGVTLDDIDE) has biased composition (acidic residues). 2 disordered regions span residues 1511-1589 (EEAE…QASS) and 1654-1676 (HDVS…HSHH). Polar residues-rich tracts occupy residues 1534–1548 (RQTA…QSRG) and 1580–1589 (YSDQARQASS).

The protein resides in the membrane. Required for nuclear positioning and completion of asexual development. This Emericella nidulans (strain FGSC A4 / ATCC 38163 / CBS 112.46 / NRRL 194 / M139) (Aspergillus nidulans) protein is Anucleate primary sterigmata protein A (apsA).